Here is a 306-residue protein sequence, read N- to C-terminus: Aspartate carbamoyltransferase catalytic subunit (306 aa).

Carbamoyl phosphate-binding residues include arginine 54 and threonine 55. Lysine 83 is a binding site for L-aspartate. Carbamoyl phosphate is bound by residues arginine 104, histidine 132, and glutamine 135. Arginine 165 and arginine 227 together coordinate L-aspartate. 2 residues coordinate carbamoyl phosphate: leucine 266 and proline 267.

The protein belongs to the aspartate/ornithine carbamoyltransferase superfamily. ATCase family. In terms of assembly, heterododecamer (2C3:3R2) of six catalytic PyrB chains organized as two trimers (C3), and six regulatory PyrI chains organized as three dimers (R2).

The catalysed reaction is carbamoyl phosphate + L-aspartate = N-carbamoyl-L-aspartate + phosphate + H(+). It functions in the pathway pyrimidine metabolism; UMP biosynthesis via de novo pathway; (S)-dihydroorotate from bicarbonate: step 2/3. Functionally, catalyzes the condensation of carbamoyl phosphate and aspartate to form carbamoyl aspartate and inorganic phosphate, the committed step in the de novo pyrimidine nucleotide biosynthesis pathway. The polypeptide is Aspartate carbamoyltransferase catalytic subunit (Finegoldia magna (strain ATCC 29328 / DSM 20472 / WAL 2508) (Peptostreptococcus magnus)).